A 204-amino-acid chain; its full sequence is uncharacterized protein (204 aa).

A compositionally biased stretch (polar residues) spans 1-10 (MQQAITQQEK). Disordered stretches follow at residues 1 to 20 (MQQA…LPNR) and 70 to 99 (DEAR…KNTE). An SPOR domain is found at 131–204 (VRDSKKFGLQ…TVTDCVVIGM (74 aa)).

This sequence to E.coli FtsN repeat regions.

This is an uncharacterized protein from Haemophilus influenzae (strain ATCC 51907 / DSM 11121 / KW20 / Rd).